A 318-amino-acid polypeptide reads, in one-letter code: Homoserine kinase (318 aa).

97-107 (PIGSGLGSSAC) is an ATP binding site.

It belongs to the GHMP kinase family. Homoserine kinase subfamily.

It is found in the cytoplasm. The enzyme catalyses L-homoserine + ATP = O-phospho-L-homoserine + ADP + H(+). The protein operates within amino-acid biosynthesis; L-threonine biosynthesis; L-threonine from L-aspartate: step 4/5. Its function is as follows. Catalyzes the ATP-dependent phosphorylation of L-homoserine to L-homoserine phosphate. The chain is Homoserine kinase from Vibrio cholerae serotype O1 (strain ATCC 39541 / Classical Ogawa 395 / O395).